The chain runs to 254 residues: Lipid uptake coordinator A (254 aa).

Transmembrane regions (helical) follow at residues 5 to 25, 44 to 64, 85 to 105, and 114 to 134; these read VAVL…FYFV, LRIA…FTLL, IMAH…EVWL, and LFGI…GFYL. The segment at 143–254 is disordered; that stretch reads PPPKPLKPKK…SGVQVAKVDE (112 aa). The segment covering 148–163 has biased composition (basic residues); it reads LKPKKPKQRRLRRKKT. The span at 169 to 191 shows a compositional bias: acidic residues; sequence AEPEAAEEAENTELAAQEDEEAV. Residues 192 to 220 are compositionally biased toward low complexity; it reads EAPPESIESPGGEPESATREAPAAETATA. Residues 227-244 show a composition bias toward basic residues; sequence LRNRRPTGKTSHRRRRTR.

Interacts with the Mce1 and Mce4 accessory subunits Rv0199/OmamA, Rv0177/Mam1C and Rv3492c/Mam4B.

It localises to the cell membrane. Required for the import of both fatty acids and cholesterol during growth in macrophages and in axenic culture. Facilitates the uptake of these lipids by stabilizing protein subunits of the Mce1 and Mce4 multi-subunit transporters, which transport fatty acids and cholesterol, respectively. Required for full virulence in vivo. In Mycobacterium tuberculosis (strain ATCC 25618 / H37Rv), this protein is Lipid uptake coordinator A.